The sequence spans 297 residues: Formylmethanofuran--tetrahydromethanopterin formyltransferase (297 aa).

Belongs to the FTR family. In terms of assembly, homotetramer.

It is found in the cytoplasm. The enzyme catalyses N-formylmethanofuran + 5,6,7,8-tetrahydromethanopterin + H(+) = N(5)-formyl-5,6,7,8-tetrahydromethanopterin + methanofuran. It participates in one-carbon metabolism; methanogenesis from CO(2); 5,10-methenyl-5,6,7,8-tetrahydromethanopterin from CO(2): step 2/3. Catalyzes the reversible transfer of a formyl group from formylmethanofuran (formyl-MFR) to tetrahydromethanopterin (H(4)MPT) to produce 5-formyl tetrahydromethanopterin (5-formyl-H(4)MPT) and methanofuran (MFR). The sequence is that of Formylmethanofuran--tetrahydromethanopterin formyltransferase from Methanosarcina barkeri (strain Fusaro / DSM 804).